Consider the following 208-residue polypeptide: ATP synthase subunit beta, chloroplastic (208 aa).

Belongs to the ATPase alpha/beta chains family. As to quaternary structure, F-type ATPases have 2 components, CF(1) - the catalytic core - and CF(0) - the membrane proton channel. CF(1) has five subunits: alpha(3), beta(3), gamma(1), delta(1), epsilon(1). CF(0) has four main subunits: a(1), b(1), b'(1) and c(9-12).

The protein resides in the plastid. Its subcellular location is the chloroplast thylakoid membrane. It catalyses the reaction ATP + H2O + 4 H(+)(in) = ADP + phosphate + 5 H(+)(out). Functionally, produces ATP from ADP in the presence of a proton gradient across the membrane. The catalytic sites are hosted primarily by the beta subunits. The chain is ATP synthase subunit beta, chloroplastic (atpB) from Lonchitis hirsuta (Tomato fern).